Here is a 177-residue protein sequence, read N- to C-terminus: B-phycoerythrin beta chain (177 aa).

The phycourobilin site is built by Cys-50 and Cys-61. Asn-72 carries the post-translational modification N4-methylasparagine. Residues Cys-82 and Cys-158 each contribute to the (2R,3E)-phycoerythrobilin site.

It belongs to the phycobiliprotein family. As to quaternary structure, heteromer of 6 alpha, 6 beta and one gamma chain. Post-translationally, contains two covalently linked phycoerythrobilin chromophores and one covalently linked phycourobilin chromophore.

The protein localises to the plastid. It localises to the chloroplast thylakoid membrane. Its function is as follows. Light-harvesting photosynthetic bile pigment-protein from the phycobiliprotein complex. The chain is B-phycoerythrin beta chain (cpeB) from Porphyridium sordidum (Red alga).